A 480-amino-acid polypeptide reads, in one-letter code: Glycogen synthase (480 aa).

The protein belongs to the glycosyltransferase 1 family. Bacterial/plant glycogen synthase subfamily.

The enzyme catalyses [(1-&gt;4)-alpha-D-glucosyl](n) + ADP-alpha-D-glucose = [(1-&gt;4)-alpha-D-glucosyl](n+1) + ADP + H(+). Its pathway is glycan biosynthesis; glycogen biosynthesis. Synthesizes alpha-1,4-glucan chains using ADP-glucose. This chain is Glycogen synthase, found in Rhizobium etli (strain ATCC 51251 / DSM 11541 / JCM 21823 / NBRC 15573 / CFN 42).